The following is a 196-amino-acid chain: Dephospho-CoA kinase (196 aa).

The DPCK domain occupies 5–196 (IIGLTGGIAT…QVDIALNFEL (192 aa)). 13–18 (ATGKTT) serves as a coordination point for ATP.

Belongs to the CoaE family.

It localises to the cytoplasm. It carries out the reaction 3'-dephospho-CoA + ATP = ADP + CoA + H(+). The protein operates within cofactor biosynthesis; coenzyme A biosynthesis; CoA from (R)-pantothenate: step 5/5. Functionally, catalyzes the phosphorylation of the 3'-hydroxyl group of dephosphocoenzyme A to form coenzyme A. This is Dephospho-CoA kinase from Trichormus variabilis (strain ATCC 29413 / PCC 7937) (Anabaena variabilis).